The primary structure comprises 91 residues: Small ribosomal subunit protein uS19 (91 aa).

This sequence belongs to the universal ribosomal protein uS19 family.

Functionally, protein S19 forms a complex with S13 that binds strongly to the 16S ribosomal RNA. The chain is Small ribosomal subunit protein uS19 from Amoebophilus asiaticus (strain 5a2).